Consider the following 116-residue polypeptide: Large ribosomal subunit protein bL19 (116 aa).

Belongs to the bacterial ribosomal protein bL19 family.

Its function is as follows. This protein is located at the 30S-50S ribosomal subunit interface and may play a role in the structure and function of the aminoacyl-tRNA binding site. The chain is Large ribosomal subunit protein bL19 from Staphylococcus aureus (strain USA300).